A 364-amino-acid chain; its full sequence is 3-isopropylmalate dehydrogenase (364 aa).

78-91 serves as a coordination point for NAD(+); the sequence is GKKWDYLSIDKRPE. Substrate is bound by residues Arg-99, Arg-109, Arg-138, and Asp-227. Mg(2+) contacts are provided by Asp-227, Asp-251, and Asp-255. 285-297 contributes to the NAD(+) binding site; sequence GSAPDIAGKNIAN.

It belongs to the isocitrate and isopropylmalate dehydrogenases family. LeuB type 1 subfamily. In terms of assembly, homodimer. Mg(2+) serves as cofactor. Mn(2+) is required as a cofactor.

The protein localises to the cytoplasm. The catalysed reaction is (2R,3S)-3-isopropylmalate + NAD(+) = 4-methyl-2-oxopentanoate + CO2 + NADH. It participates in amino-acid biosynthesis; L-leucine biosynthesis; L-leucine from 3-methyl-2-oxobutanoate: step 3/4. Functionally, catalyzes the oxidation of 3-carboxy-2-hydroxy-4-methylpentanoate (3-isopropylmalate) to 3-carboxy-4-methyl-2-oxopentanoate. The product decarboxylates to 4-methyl-2 oxopentanoate. In Buchnera aphidicola subsp. Uroleucon erigeronensis, this protein is 3-isopropylmalate dehydrogenase.